The chain runs to 416 residues: MYTLSVSSLNEQIKALLEESFSRVLVEGELSRITFHSSGHIYFTLKDENSTIKAVIFKANAAKLKFQLQEGLKVILDGAITLYKPRGEYQINCFSISPAGHGALALAYEQLKNRLASKGYFESSRKKQLPKFPKRIALITSATGAAVADMLRVAMSRYRAIEIDIYDVLVQGDNAAPSIIRALSLADTKGYDIIVLGRGGGSIEDLWAFNEEIVADAIFSAITPIISAVGHEIDWVISDFVADLRAPTPSAAMEMCLPDEKELYQFIDSLVARYEQMISQKLYGVKQELEHISRLYQDHSIEKKISYKLEEIAQLKLSFTNSIYFKMQSFNKEVESIKIRFPNAIQSRINIVQNQVLTLQKMLESNHPRLKTKKGFAQISKDSKVIDIESLIVDEVFDLMSDRVVISAKVINKKNI.

The protein belongs to the XseA family. In terms of assembly, heterooligomer composed of large and small subunits.

The protein resides in the cytoplasm. The catalysed reaction is Exonucleolytic cleavage in either 5'- to 3'- or 3'- to 5'-direction to yield nucleoside 5'-phosphates.. In terms of biological role, bidirectionally degrades single-stranded DNA into large acid-insoluble oligonucleotides, which are then degraded further into small acid-soluble oligonucleotides. The chain is Exodeoxyribonuclease 7 large subunit from Sulfurimonas denitrificans (strain ATCC 33889 / DSM 1251) (Thiomicrospira denitrificans (strain ATCC 33889 / DSM 1251)).